Consider the following 600-residue polypeptide: Alpha pinene synthase, chloroplastic (600 aa).

The tract at residues 1-27 is disordered; that stretch reads MSSISMHAGPLNISAANNHHPSWDRRV. Residues 1 to 31 constitute a chloroplast transit peptide; that stretch reads MSSISMHAGPLNISAANNHHPSWDRRVSKPR. Residues Asp354, Asp358, Asp498, and Glu506 each coordinate Mg(2+). The short motif at 354–358 is the DDXXD motif element; the sequence is DDVYD.

The protein belongs to the terpene synthase family. Tpsa subfamily. Mg(2+) serves as cofactor. Mn(2+) is required as a cofactor. In terms of tissue distribution, expressed at low levels in leaves.

It localises to the plastid. The protein resides in the chloroplast. It carries out the reaction (2E)-geranyl diphosphate = alpha-pinene + diphosphate. It functions in the pathway secondary metabolite biosynthesis; terpenoid biosynthesis. In terms of biological role, monoterpene synthase involved in the biosynthesis of volatile compounds widely used in aromatherapy and folk medicine, and present in culinary herbs. Mediates the conversion of (2E)-geranyl diphosphate (GPP) into alpha-pinene and, as minor compounds, into alpha-phellandrene, limonene and alpha-terpinolene. This chain is Alpha pinene synthase, chloroplastic, found in Lavandula viridis (Green lavender).